A 390-amino-acid chain; its full sequence is MVAPLVSESQSSSIEETDEQQQQYQQLARRRTIQSDLVDIEAESISSALPEGFNYEKKTTATRFLDKTQKYYPVILNIVHGAIWGVLVRKGLMSLTTYSGSFLSGVIWANFAACVVMGLAIDGEVFWIRLLEEKDYPNKGAIPVYTGLTTGFCGTVSSFSSVILEAFNKAADTDIGVRHHYPNGAYGIMQFLAVILAQFGLSIMGFHMGKQFSAVVDNYLPLVTKRIYKVLELTSMILGVVLVVITCILIGVKKQGSWRSWTFSMLFAPFGALLRYYLSKFLNNKVSNFPLGTFTANFLGTLLLAVFTLLARGKLPGGKGHIVTNTIALHVLEGLDDGFCGGLTTVSTFVVELFGLKTLFSYRYGTISILVCFAGVVLILGSYNWSVGLD.

The tract at residues 1–22 is disordered; that stretch reads MVAPLVSESQSSSIEETDEQQQ. Over 1 to 72 the chain is Cytoplasmic; it reads MVAPLVSESQ…RFLDKTQKYY (72 aa). A helical transmembrane segment spans residues 73–93; it reads PVILNIVHGAIWGVLVRKGLM. The Extracellular segment spans residues 94–100; it reads SLTTYSG. A helical transmembrane segment spans residues 101–121; that stretch reads SFLSGVIWANFAACVVMGLAI. Over 122–143 the chain is Cytoplasmic; the sequence is DGEVFWIRLLEEKDYPNKGAIP. Residues 144 to 164 traverse the membrane as a helical segment; sequence VYTGLTTGFCGTVSSFSSVIL. Topologically, residues 165-185 are extracellular; the sequence is EAFNKAADTDIGVRHHYPNGA. A helical transmembrane segment spans residues 186–206; sequence YGIMQFLAVILAQFGLSIMGF. Over 207-229 the chain is Cytoplasmic; the sequence is HMGKQFSAVVDNYLPLVTKRIYK. Residues 230–250 traverse the membrane as a helical segment; sequence VLELTSMILGVVLVVITCILI. The Extracellular portion of the chain corresponds to 251-256; sequence GVKKQG. The helical transmembrane segment at 257 to 279 threads the bilayer; that stretch reads SWRSWTFSMLFAPFGALLRYYLS. Over 280–290 the chain is Cytoplasmic; the sequence is KFLNNKVSNFP. A helical membrane pass occupies residues 291 to 311; that stretch reads LGTFTANFLGTLLLAVFTLLA. Residues 312–338 are Extracellular-facing; the sequence is RGKLPGGKGHIVTNTIALHVLEGLDDG. Residues 339–359 traverse the membrane as a helical segment; the sequence is FCGGLTTVSTFVVELFGLKTL. The Cytoplasmic portion of the chain corresponds to 360-368; it reads FSYRYGTIS. Residues 369 to 389 traverse the membrane as a helical segment; the sequence is ILVCFAGVVLILGSYNWSVGL. A topological domain (extracellular) is located at residue D390.

Belongs to the fluoride channel Fluc/FEX (TC 1.A.43) family.

The protein localises to the cell membrane. The enzyme catalyses fluoride(in) = fluoride(out). In terms of biological role, fluoride channel required for the rapid expulsion of cytoplasmic fluoride. This is Fluoride export protein 1 from Candida albicans (strain SC5314 / ATCC MYA-2876) (Yeast).